Here is a 400-residue protein sequence, read N- to C-terminus: NADH-quinone oxidoreductase subunit D (400 aa).

It belongs to the complex I 49 kDa subunit family. NDH-1 is composed of 14 different subunits. Subunits NuoB, C, D, E, F, and G constitute the peripheral sector of the complex.

Its subcellular location is the cell inner membrane. The catalysed reaction is a quinone + NADH + 5 H(+)(in) = a quinol + NAD(+) + 4 H(+)(out). In terms of biological role, NDH-1 shuttles electrons from NADH, via FMN and iron-sulfur (Fe-S) centers, to quinones in the respiratory chain. The immediate electron acceptor for the enzyme in this species is believed to be a menaquinone. Couples the redox reaction to proton translocation (for every two electrons transferred, four hydrogen ions are translocated across the cytoplasmic membrane), and thus conserves the redox energy in a proton gradient. In Chlorobaculum parvum (strain DSM 263 / NCIMB 8327) (Chlorobium vibrioforme subsp. thiosulfatophilum), this protein is NADH-quinone oxidoreductase subunit D.